The primary structure comprises 176 residues: MTRQESYNFDELLLSGHGRLFGPGNPQLPAPQMLMFHRITQMSEEGGAYDKGQVIAELDLDPDLWFFRCHFPGDPVMPGCLGLDALWQLVGFYLGWIGGSGKGRALGCGEVKFSGQILPEHKKVTYEIAFKRVINRRLVMGIADGWVSVDGEQIYTAKDLKVGLFQDPGDLSRSQG.

His-70 is an active-site residue.

Belongs to the thioester dehydratase family. FabA subfamily. As to quaternary structure, homodimer.

The protein localises to the cytoplasm. The catalysed reaction is a (3R)-hydroxyacyl-[ACP] = a (2E)-enoyl-[ACP] + H2O. The enzyme catalyses (3R)-hydroxydecanoyl-[ACP] = (2E)-decenoyl-[ACP] + H2O. It catalyses the reaction (2E)-decenoyl-[ACP] = (3Z)-decenoyl-[ACP]. The protein operates within lipid metabolism; fatty acid biosynthesis. Functionally, necessary for the introduction of cis unsaturation into fatty acids. Catalyzes the dehydration of (3R)-3-hydroxydecanoyl-ACP to E-(2)-decenoyl-ACP and then its isomerization to Z-(3)-decenoyl-ACP. Can catalyze the dehydratase reaction for beta-hydroxyacyl-ACPs with saturated chain lengths up to 16:0, being most active on intermediate chain length. In Alkalilimnicola ehrlichii (strain ATCC BAA-1101 / DSM 17681 / MLHE-1), this protein is 3-hydroxydecanoyl-[acyl-carrier-protein] dehydratase.